Reading from the N-terminus, the 367-residue chain is Probable peptidoglycan glycosyltransferase FtsW (367 aa).

The next 9 membrane-spanning stretches (helical) occupy residues 32 to 52, 57 to 77, 87 to 107, 119 to 139, 149 to 169, 171 to 191, 251 to 271, 296 to 316, and 323 to 343; these read LIFI…PMKF, AFWG…PGIG, IPIG…MIVF, IHGL…CFLL, MVVV…FALF, LLFL…PWRM, VVGE…FVLL, GVVV…FGVF, and LPFI…FGLL.

It belongs to the SEDS family. FtsW subfamily.

The protein resides in the cell inner membrane. The catalysed reaction is [GlcNAc-(1-&gt;4)-Mur2Ac(oyl-L-Ala-gamma-D-Glu-L-Lys-D-Ala-D-Ala)](n)-di-trans,octa-cis-undecaprenyl diphosphate + beta-D-GlcNAc-(1-&gt;4)-Mur2Ac(oyl-L-Ala-gamma-D-Glu-L-Lys-D-Ala-D-Ala)-di-trans,octa-cis-undecaprenyl diphosphate = [GlcNAc-(1-&gt;4)-Mur2Ac(oyl-L-Ala-gamma-D-Glu-L-Lys-D-Ala-D-Ala)](n+1)-di-trans,octa-cis-undecaprenyl diphosphate + di-trans,octa-cis-undecaprenyl diphosphate + H(+). It participates in cell wall biogenesis; peptidoglycan biosynthesis. Its function is as follows. Peptidoglycan polymerase that is essential for cell division. This is Probable peptidoglycan glycosyltransferase FtsW from Taylorella equigenitalis (strain MCE9).